The following is a 190-amino-acid chain: Transcription antitermination protein NusB (190 aa).

Positions Ala-135 to Asp-190 are disordered. Over residues Val-141 to Ser-150 the composition is skewed to acidic residues.

This sequence belongs to the NusB family.

Functionally, involved in transcription antitermination. Required for transcription of ribosomal RNA (rRNA) genes. Binds specifically to the boxA antiterminator sequence of the ribosomal RNA (rrn) operons. This is Transcription antitermination protein NusB from Bifidobacterium longum (strain DJO10A).